A 373-amino-acid chain; its full sequence is Transaminase AMT5 (373 aa).

Arg-92 lines the pyridoxal 5'-phosphate pocket. Lys-196 carries the N6-(pyridoxal phosphate)lysine modification. A pyridoxal 5'-phosphate-binding site is contributed by Glu-232.

It belongs to the class-IV pyridoxal-phosphate-dependent aminotransferase family. Pyridoxal 5'-phosphate is required as a cofactor.

Its pathway is mycotoxin biosynthesis. Transaminase; part of the gene clusters that mediate the biosynthesis of AM-toxins, host-selective toxins (HSTs) causing Alternaria blotch on apple, a worldwide distributed disease. AM-toxins are cyclic depsipeptides containing the 3 residues 2-hydroxy-isovaleric acid (2-HIV), dehydroalanine, L-alanine which are common for all 3 AM-toxins I to III. The fourth precursor is L-alpha-amino-methoxyphenyl-valeric acid (L-Amv) for AM-toxin I, L-alpha-amino-phenyl-valeric acid (L-Apv) for AM-toxin II, and L-alpha-amino-hydroxyphenyl-valeric acid (L-Ahv) for AM-toxin III. AM-toxins have two target sites for affecting susceptible apple cells; they cause invagination of the plasma membrane and electrolyte loss and chloroplast disorganization. The non-ribosomal peptide synthetase AMT1 contains 4 catalytic modules and is responsible for activation of each residue in AM-toxin. The aldo-keto reductase AMT2 catalyzes the conversion of 2-keto-isovaleric acid (2-KIV) to 2-hydroxy-isovaleric acid (2-HIV), one of the precursor residues incorporated by AMT1 during AM-toxin biosynthesis, by reduction of its ketone to an alcohol. The cytochrome P450 monooxygenase AMT3 and the thioesterase AMT4 are also important for AM-toxin production, but their exact function within the AM-toxin biosynthesis are not known yet. Up to 21 proteins (including AMT1 to AMT4) are predicted to be involved in AM-toxin biosynthesis since their expression is highly up-regulated in AM-toxin-producing cultures. The polypeptide is Transaminase AMT5 (Alternaria alternata (Alternaria rot fungus)).